The sequence spans 201 residues: Small ribosomal subunit protein uS4c (201 aa).

The S4 RNA-binding domain occupies 89 to 150; sequence MRLDNIVFRL…RQKSQAIITK (62 aa).

Belongs to the universal ribosomal protein uS4 family. Part of the 30S ribosomal subunit. Contacts protein S5. The interaction surface between S4 and S5 is involved in control of translational fidelity.

It localises to the plastid. The protein localises to the chloroplast. Functionally, one of the primary rRNA binding proteins, it binds directly to 16S rRNA where it nucleates assembly of the body of the 30S subunit. Its function is as follows. With S5 and S12 plays an important role in translational accuracy. This Physcomitrium patens (Spreading-leaved earth moss) protein is Small ribosomal subunit protein uS4c (rps4).